Consider the following 209-residue polypeptide: 7-carboxy-7-deazaguanine synthase (209 aa).

Substrate contacts are provided by residues 10–12 and arginine 25; that span reads IQG. The Radical SAM core domain maps to 16–205; sequence YAGLPMLFVR…PQIHKIIYGD (190 aa). Cysteine 29, cysteine 33, and cysteine 36 together coordinate [4Fe-4S] cluster. Threonine 38 serves as a coordination point for Mg(2+). Residue threonine 68 coordinates substrate. Position 70 (glycine 70) interacts with S-adenosyl-L-methionine.

Belongs to the radical SAM superfamily. 7-carboxy-7-deazaguanine synthase family. As to quaternary structure, homodimer. [4Fe-4S] cluster serves as cofactor. S-adenosyl-L-methionine is required as a cofactor. The cofactor is Mg(2+).

The catalysed reaction is 6-carboxy-5,6,7,8-tetrahydropterin + H(+) = 7-carboxy-7-deazaguanine + NH4(+). It participates in purine metabolism; 7-cyano-7-deazaguanine biosynthesis. Its function is as follows. Catalyzes the complex heterocyclic radical-mediated conversion of 6-carboxy-5,6,7,8-tetrahydropterin (CPH4) to 7-carboxy-7-deazaguanine (CDG), a step common to the biosynthetic pathways of all 7-deazapurine-containing compounds. In Thermoplasma acidophilum (strain ATCC 25905 / DSM 1728 / JCM 9062 / NBRC 15155 / AMRC-C165), this protein is 7-carboxy-7-deazaguanine synthase.